A 173-amino-acid chain; its full sequence is MSKAEMVANKIKERFPNAEVVVKTNKWGRERVWVRISREEYKELMKFIRELDPEAHYSIGIEQDWGDELGFLNHILLFYDEPPGVSLLIDVHAPKDNPVLPDTSDIFPISLQFEREGMEMVGLDFEGAPDKRRLFLPDDFPEGIYPLRTDEKGVPEEMVKNAGHPYLLRREKK.

It belongs to the complex I 30 kDa subunit family. In terms of assembly, the membrane-bound hydrogenase complex is composed of MbhK and MbhL, and may also contain MbhJ. Ni(2+) serves as cofactor.

It is found in the cell membrane. The enzyme catalyses H2 + 2 oxidized [2Fe-2S]-[ferredoxin] = 2 reduced [2Fe-2S]-[ferredoxin] + 2 H(+). Its activity is regulated as follows. Inhibited by 0.1 mM Cu(2+). Its function is as follows. Beta subunit of a hydrogen-evolving hydrogenase that utilizes protons both as a substrate for hydrogen production and proton translocation. Acts by coupling the redox reaction via ferredoxin and iron-sulfur (Fe-S) clusters to proton translocation across the membrane thereby conserving the redox energy in a proton gradient. The polypeptide is Membrane-bound hydrogenase subunit beta (Pyrococcus furiosus (strain ATCC 43587 / DSM 3638 / JCM 8422 / Vc1)).